Here is a 59-residue protein sequence, read N- to C-terminus: U-actitoxin-Aer2b (59 aa).

Contains 5 disulfide bonds.

It is found in the secreted. It localises to the nematocyst. This is U-actitoxin-Aer2b from Anemonia erythraea (Sea anemone).